The primary structure comprises 129 residues: Small ribosomal subunit protein uS11 (129 aa).

The protein belongs to the universal ribosomal protein uS11 family. As to quaternary structure, part of the 30S ribosomal subunit. Interacts with proteins S7 and S18. Binds to IF-3.

Functionally, located on the platform of the 30S subunit, it bridges several disparate RNA helices of the 16S rRNA. Forms part of the Shine-Dalgarno cleft in the 70S ribosome. This chain is Small ribosomal subunit protein uS11, found in Aeromonas hydrophila subsp. hydrophila (strain ATCC 7966 / DSM 30187 / BCRC 13018 / CCUG 14551 / JCM 1027 / KCTC 2358 / NCIMB 9240 / NCTC 8049).